A 342-amino-acid polypeptide reads, in one-letter code: Isopentenyl-diphosphate delta-isomerase (342 aa).

11-12 (RK) provides a ligand contact to substrate. FMN-binding positions include S68, 69–71 (SMT), S99, and N128. 99 to 101 (SQR) contributes to the substrate binding site. Q162 is a binding site for substrate. Residue E163 coordinates Mg(2+). Residues K194, S219, T224, 275-277 (GVR), and 296-297 (AK) contribute to the FMN site.

It belongs to the IPP isomerase type 2 family. In terms of assembly, homooctamer. Dimer of tetramers. FMN is required as a cofactor. The cofactor is NADPH. Mg(2+) serves as cofactor.

It is found in the cytoplasm. The catalysed reaction is isopentenyl diphosphate = dimethylallyl diphosphate. In terms of biological role, involved in the biosynthesis of isoprenoids. Catalyzes the 1,3-allylic rearrangement of the homoallylic substrate isopentenyl (IPP) to its allylic isomer, dimethylallyl diphosphate (DMAPP). The chain is Isopentenyl-diphosphate delta-isomerase from Legionella pneumophila (strain Paris).